A 602-amino-acid chain; its full sequence is Translation factor GUF1 homolog, organellar chromatophore (602 aa).

Residues 7-189 (SRIRNFCIIA…AIVERIPPPV (183 aa)) form the tr-type G domain. GTP contacts are provided by residues 16–23 (AHIDHGKS), 82–86 (DTPGH), and 136–139 (NKID).

It belongs to the TRAFAC class translation factor GTPase superfamily. Classic translation factor GTPase family. LepA subfamily.

It localises to the plastid. It is found in the organellar chromatophore. It catalyses the reaction GTP + H2O = GDP + phosphate + H(+). Functionally, promotes protein synthesis. May act as a fidelity factor of the translation reaction, by catalyzing a one-codon backward translocation of tRNAs on improperly translocated ribosomes. This chain is Translation factor GUF1 homolog, organellar chromatophore, found in Paulinella chromatophora.